Consider the following 650-residue polypeptide: DNA topoisomerase 3 (650 aa).

One can recognise a Toprim domain in the interval 1 to 134; it reads MRLFIAEKPS…KLNQIQRCLI (134 aa). Positions 7, 103, and 105 each coordinate Mg(2+). In terms of domain architecture, Topo IA-type catalytic spans 155–617; that stretch reads FIPLATSALA…TLTNFLPELM (463 aa). Residues 194–199 are interaction with DNA; sequence SVGRVQ. Tyr342 serves as the catalytic O-(5'-phospho-DNA)-tyrosine intermediate.

It belongs to the type IA topoisomerase family. The cofactor is Mg(2+).

The catalysed reaction is ATP-independent breakage of single-stranded DNA, followed by passage and rejoining.. Releases the supercoiling and torsional tension of DNA, which is introduced during the DNA replication and transcription, by transiently cleaving and rejoining one strand of the DNA duplex. Introduces a single-strand break via transesterification at a target site in duplex DNA. The scissile phosphodiester is attacked by the catalytic tyrosine of the enzyme, resulting in the formation of a DNA-(5'-phosphotyrosyl)-enzyme intermediate and the expulsion of a 3'-OH DNA strand. The free DNA strand then undergoes passage around the unbroken strand, thus removing DNA supercoils. Finally, in the religation step, the DNA 3'-OH attacks the covalent intermediate to expel the active-site tyrosine and restore the DNA phosphodiester backbone. The polypeptide is DNA topoisomerase 3 (Pasteurella multocida (strain Pm70)).